Reading from the N-terminus, the 130-residue chain is Small ribosomal subunit protein uS8 (130 aa).

It belongs to the universal ribosomal protein uS8 family. Part of the 30S ribosomal subunit. Contacts proteins S5 and S12.

One of the primary rRNA binding proteins, it binds directly to 16S rRNA central domain where it helps coordinate assembly of the platform of the 30S subunit. In Pseudoalteromonas translucida (strain TAC 125), this protein is Small ribosomal subunit protein uS8.